The chain runs to 274 residues: MHTLKNIINKTFDNKLNIHQHNVDQKTTDAINQVLHMLNIGKLRVSEKINGFWITHQWLKKAILLSFLVNKNVLFSNKQTCFYDKIKLKYCNYTEEKFKNEKIRIVPPATVRHGAFIGKNTILMPCYVNTGAYIDEGTMIDTWATVGSCAQIGKNVHLSGGVGIGGVLEPLQNNPTIIEDNCFIGARSEIVEGVIIESNSVISMGVFIGQSTKIYDRNNKKILYGKVPSGSVVVPGSLPSKNNCNLYCVVIVKQVNAQTLSKTGINKLLREITE.

Residues arginine 104 and aspartate 141 each coordinate substrate.

Belongs to the transferase hexapeptide repeat family. In terms of assembly, homotrimer.

Its subcellular location is the cytoplasm. It carries out the reaction (S)-2,3,4,5-tetrahydrodipicolinate + succinyl-CoA + H2O = (S)-2-succinylamino-6-oxoheptanedioate + CoA. The protein operates within amino-acid biosynthesis; L-lysine biosynthesis via DAP pathway; LL-2,6-diaminopimelate from (S)-tetrahydrodipicolinate (succinylase route): step 1/3. The sequence is that of 2,3,4,5-tetrahydropyridine-2,6-dicarboxylate N-succinyltransferase from Buchnera aphidicola subsp. Baizongia pistaciae (strain Bp).